A 495-amino-acid polypeptide reads, in one-letter code: MTTATPAKTKYEAIIGLETHCQLNTNSKIFCACSTNFDSPPNTNICPICLGYPGVLPVLNEEVLASAVKLGLAINGKIASYSKFDRKQYFYADLPKNYQISQYDLPIVEHGFLEIELVDKKTKEVTRKTIGITRLHMEEDAGKLVHAGSDRLAGSTHSLVDFNRTGVPLLEIVSEPDLRSGQEAAEYAQELRRLVRYLGISDGNMQEGSLRCDVNISIRPVGQKEFGTKVEIKNMNSFSAIQKAIEYEIERQIEALENNEPIYQETRLWEEKTQCTVSMRKKEGSSDYRYFPEPDLPPLEVSPEQLEHWKHQLPELPAQKRSRYEAEFGLSAYDARVLTDDRDVANYYEAAVAAGADAKLVANWVTQDIAAYLNNNKLAIAEIVLTPQSLGELVQLIETGTISGKIAKEILPELLEKGGSPKELVAKKGMTQISDLGELEKIIDEIIAANPKELEKFRSGKTNLKGFFVGQVMKQTGGRADPKLTNQLVDQKLQG.

The protein belongs to the GatB/GatE family. GatB subfamily. In terms of assembly, heterotrimer of A, B and C subunits.

The enzyme catalyses L-glutamyl-tRNA(Gln) + L-glutamine + ATP + H2O = L-glutaminyl-tRNA(Gln) + L-glutamate + ADP + phosphate + H(+). It carries out the reaction L-aspartyl-tRNA(Asn) + L-glutamine + ATP + H2O = L-asparaginyl-tRNA(Asn) + L-glutamate + ADP + phosphate + 2 H(+). In terms of biological role, allows the formation of correctly charged Asn-tRNA(Asn) or Gln-tRNA(Gln) through the transamidation of misacylated Asp-tRNA(Asn) or Glu-tRNA(Gln) in organisms which lack either or both of asparaginyl-tRNA or glutaminyl-tRNA synthetases. The reaction takes place in the presence of glutamine and ATP through an activated phospho-Asp-tRNA(Asn) or phospho-Glu-tRNA(Gln). In Rippkaea orientalis (strain PCC 8801 / RF-1) (Cyanothece sp. (strain PCC 8801)), this protein is Aspartyl/glutamyl-tRNA(Asn/Gln) amidotransferase subunit B.